A 553-amino-acid polypeptide reads, in one-letter code: Serine/threonine-protein kinase WNG2 (553 aa).

2 disordered regions span residues 1 to 20 (MMFPAVAAPPRRLPGERLQR) and 88 to 107 (NREPPEDSAARPSSRSGGAE). The first 64 residues, 1–64 (MMFPAVAAPP…GLSWVSVAVA (64 aa)), serve as a signal peptide directing secretion. The Protein kinase domain maps to 125–395 (FKQLRPVDEF…IGEVMEDPFF (271 aa)). K186 serves as a coordination point for ATP. Catalysis depends on D278, which acts as the Proton acceptor. Residues 432-553 (REKADAAAKA…GFNKEDAQES (122 aa)) form a disordered region. Residues 438 to 451 (AAKAADNAEVPAAK) are compositionally biased toward low complexity. Composition is skewed to basic and acidic residues over residues 465–486 (GDRDRAGSGEKPAERAEEEKGR), 494–524 (EGNHDRTDDAGREELREGPGDQKPSGEENRE), and 531–553 (QREEQREGTGLEEGFNKEDAQES).

Belongs to the protein kinase superfamily. STE Ser/Thr protein kinase family. WNG subfamily. The cofactor is Mg(2+).

It is found in the cytoplasmic granule. The protein resides in the secreted. Its subcellular location is the parasitophorous vacuole lumen. The catalysed reaction is L-seryl-[protein] + ATP = O-phospho-L-seryl-[protein] + ADP + H(+). It catalyses the reaction L-threonyl-[protein] + ATP = O-phospho-L-threonyl-[protein] + ADP + H(+). Its function is as follows. Probable serine/threonine-protein kinase. The polypeptide is Serine/threonine-protein kinase WNG2 (Toxoplasma gondii).